A 358-amino-acid polypeptide reads, in one-letter code: Phosphate acyltransferase (358 aa).

Residues 336 to 358 (SAAGAAPASPETAPTPHPSTRAA) are disordered.

This sequence belongs to the PlsX family. Homodimer. Probably interacts with PlsY.

It is found in the cytoplasm. It carries out the reaction a fatty acyl-[ACP] + phosphate = an acyl phosphate + holo-[ACP]. The protein operates within lipid metabolism; phospholipid metabolism. Functionally, catalyzes the reversible formation of acyl-phosphate (acyl-PO(4)) from acyl-[acyl-carrier-protein] (acyl-ACP). This enzyme utilizes acyl-ACP as fatty acyl donor, but not acyl-CoA. The polypeptide is Phosphate acyltransferase (Cupriavidus pinatubonensis (strain JMP 134 / LMG 1197) (Cupriavidus necator (strain JMP 134))).